A 313-amino-acid chain; its full sequence is Malate dehydrogenase (313 aa).

NAD(+) is bound by residues 11 to 16 and Asp35; that span reads GSGNIG. The substrate site is built by Arg84 and Arg90. NAD(+)-binding positions include Asn97 and 120–122; that span reads VTN. Residues Asn122 and Arg153 each coordinate substrate. His177 acts as the Proton acceptor in catalysis.

This sequence belongs to the LDH/MDH superfamily. MDH type 3 family.

It catalyses the reaction (S)-malate + NAD(+) = oxaloacetate + NADH + H(+). Functionally, catalyzes the reversible oxidation of malate to oxaloacetate. This chain is Malate dehydrogenase, found in Ehrlichia ruminantium (strain Welgevonden).